Reading from the N-terminus, the 311-residue chain is Heme A synthase (311 aa).

Topologically, residues 1 to 6 are cytoplasmic; it reads MQRFIK. Residues 7-27 traverse the membrane as a helical segment; sequence WLAVITSLDLLVVLLGGALVT. Over 28-62 the chain is Extracellular; it reads KTGSGQGCGKSWPLCNGEFVPSNLSMETIIELSHR. C35 and C42 are oxidised to a cystine. E58 is an active-site residue. Residue H61 participates in heme o binding. The helical transmembrane segment at 63-83 threads the bilayer; the sequence is LTSGSAGILVTLLCILSWKYY. Residues 84–91 are Cytoplasmic-facing; it reads KHVRETKT. The helical transmembrane segment at 92–112 threads the bilayer; it reads LAILSFVFLVAQALMGAAAVV. The Extracellular segment spans residues 113-121; the sequence is WGQMPAVLA. The helical transmembrane segment at 122 to 142 threads the bilayer; the sequence is IHFGISLISFASVILLTCLIF. H123 contributes to the heme o binding site. The Cytoplasmic portion of the chain corresponds to 143-159; the sequence is EIDQKFDARSLIMDKKM. A helical membrane pass occupies residues 160–180; the sequence is KFHIYGVTIYSYIVVYTGALV. Topologically, residues 181 to 211 are extracellular; sequence RHERATLACPDFPLCSKSRPMPTQLHEWVQM. C189 and C195 are joined by a disulfide. The helical transmembrane segment at 212 to 232 threads the bilayer; that stretch reads GHRVAAMLIFAWILYAMIIAI. H213 lines the heme b pocket. Topologically, residues 233 to 243 are cytoplasmic; sequence RHYKQQRVVYW. The chain crosses the membrane as a helical span at residues 244–264; it reads GWIISFILVTLQAIVGILVVF. Topologically, residues 265–271 are extracellular; sequence TNASLAM. Residues 272-292 traverse the membrane as a helical segment; sequence ALLHSLFISCLFAVLCYLVMI. A heme b-binding site is contributed by H275. Residues 293-311 are Cytoplasmic-facing; sequence GTRSTVNAKETESTSKQTK.

It belongs to the COX15/CtaA family. Type 1 subfamily. As to quaternary structure, interacts with CtaB. Heme b serves as cofactor.

Its subcellular location is the cell membrane. It catalyses the reaction Fe(II)-heme o + 2 A + H2O = Fe(II)-heme a + 2 AH2. It functions in the pathway porphyrin-containing compound metabolism; heme A biosynthesis; heme A from heme O: step 1/1. Its function is as follows. Catalyzes the conversion of heme O to heme A by two successive hydroxylations of the methyl group at C8. The first hydroxylation forms heme I, the second hydroxylation results in an unstable dihydroxymethyl group, which spontaneously dehydrates, resulting in the formyl group of heme A. This chain is Heme A synthase, found in Bacillus mycoides (strain KBAB4) (Bacillus weihenstephanensis).